A 396-amino-acid polypeptide reads, in one-letter code: Phosphoglycerate kinase (396 aa).

Substrate contacts are provided by residues 21–23 (DFN), R36, 59–62 (HLGK), R119, and R156. Residues K206, G294, E325, and 352-355 (GGDS) contribute to the ATP site.

The protein belongs to the phosphoglycerate kinase family. In terms of assembly, monomer.

The protein resides in the cytoplasm. The enzyme catalyses (2R)-3-phosphoglycerate + ATP = (2R)-3-phospho-glyceroyl phosphate + ADP. It functions in the pathway carbohydrate degradation; glycolysis; pyruvate from D-glyceraldehyde 3-phosphate: step 2/5. This is Phosphoglycerate kinase from Listeria innocua serovar 6a (strain ATCC BAA-680 / CLIP 11262).